A 419-amino-acid chain; its full sequence is Protein FAM217A (419 aa).

Disordered regions lie at residues Met-1–Leu-23, Asp-100–Ser-119, Pro-234–Leu-298, and Pro-362–Ser-388. The segment covering Glu-7–Leu-23 has biased composition (polar residues). Over residues Ser-284 to Leu-298 the composition is skewed to polar residues. Residues Pro-378–Ser-388 are compositionally biased toward basic residues.

Belongs to the FAM217 family.

In Rattus norvegicus (Rat), this protein is Protein FAM217A (Fam217a).